Reading from the N-terminus, the 25-residue chain is GLLDIVTGLLGNLIVDVLKPKTPAS.

Belongs to the frog skin active peptide (FSAP) family. Aurein subfamily. In terms of tissue distribution, expressed by the skin dorsal glands.

The protein localises to the secreted. In terms of biological role, has no antimicrobial or anticancer activity. This Ranoidea aurea (Green and golden bell frog) protein is Aurein-5.1.